The chain runs to 907 residues: Translation initiation factor IF-2 (907 aa).

Residues 1–305 (MSEGNDQDQG…SLASVRRQRE (305 aa)) are disordered. A compositionally biased stretch (gly residues) spans 62–80 (SGSGSSGGGRAGGRGGSGG). Basic and acidic residues-rich tracts occupy residues 93-114 (RVLE…EQEK) and 122-158 (EEAR…ERRA). The segment covering 211–230 (PARPVTPSRPATPAATPQAP) has biased composition (low complexity). 2 stretches are compositionally biased toward basic and acidic residues: residues 240 to 249 (RVGEAEDDRR) and 271 to 280 (KGGDSRRSGR). Residues 406–576 (PRPPVVTVMG…LLQAEMLDLR (171 aa)) form the tr-type G domain. Residues 415–422 (GHVDHGKT) are G1. 415–422 (GHVDHGKT) serves as a coordination point for GTP. The tract at residues 440–444 (GITQH) is G2. A G3 region spans residues 462–465 (DTPG). GTP contacts are provided by residues 462–466 (DTPGH) and 516–519 (NKCD). The segment at 516-519 (NKCD) is G4. A G5 region spans residues 552 to 554 (SAL).

The protein belongs to the TRAFAC class translation factor GTPase superfamily. Classic translation factor GTPase family. IF-2 subfamily.

Its subcellular location is the cytoplasm. One of the essential components for the initiation of protein synthesis. Protects formylmethionyl-tRNA from spontaneous hydrolysis and promotes its binding to the 30S ribosomal subunits. Also involved in the hydrolysis of GTP during the formation of the 70S ribosomal complex. This is Translation initiation factor IF-2 from Gluconacetobacter diazotrophicus (strain ATCC 49037 / DSM 5601 / CCUG 37298 / CIP 103539 / LMG 7603 / PAl5).